Reading from the N-terminus, the 265-residue chain is Acrosomal protein SP-10 (265 aa).

Residues 1–21 (MNRFLLLMSLYLLGSARGTSS) form the signal peptide. The segment at 62–181 (LNTLSEHGSS…EQASGAPISS (120 aa)) is disordered. 16 consecutive repeat copies span residues 66 to 70 (SEHGS), 71 to 75 (SEHGS), 85 to 88 (SGEH), 91 to 95 (SEHAS), 110 to 114 (VGEQP), 115 to 119 (SGEQP), 120 to 123 (SGEH), 125 to 129 (SGEQP), 135 to 139 (SGEQP), 140 to 144 (SDEQP), 145 to 148 (SGEH), 150 to 154 (SGEQP), 155 to 159 (SGEQA), 160 to 164 (SGEQP), 165 to 168 (SGEH), and 170 to 174 (SGEQA). The segment at 66–95 (SEHGSSEHGSSKHTVAEHTSGEHAESEHAS) is 3 X 5 AA repeats of S-E-H-[GA]-S. A compositionally biased stretch (basic and acidic residues) spans 69-110 (GSSEHGSSKHTVAEHTSGEHAESEHASGEPAATEHAEGEHTV). A 4 X 4 AA repeats of S-G-E-H region spans residues 85 to 168 (SGEHAESEHA…ASGEQPSGEH (84 aa)). The 9 X 5 AA repeats of [SV]-G-E-Q-[PSA] stretch occupies residues 110 to 174 (VGEQPSGEQP…SGEHASGEQA (65 aa)). Residues 152–163 (EQPSGEQASGEQ) show a composition bias toward polar residues. Asparagine 258 carries N-linked (GlcNAc...) asparagine glycosylation.

As to expression, testis.

The protein resides in the cytoplasmic vesicle. The protein localises to the secretory vesicle. Its subcellular location is the acrosome. The sequence is that of Acrosomal protein SP-10 (ACRV1) from Homo sapiens (Human).